The following is a 720-amino-acid chain: Phosphoribosylformylglycinamidine synthase subunit PurL (720 aa).

His-47 is a catalytic residue. The ATP site is built by Tyr-50 and Lys-89. Glu-91 is a binding site for Mg(2+). Residues 92-95 (SHNH) and Arg-114 contribute to the substrate site. His-93 serves as the catalytic Proton acceptor. Asp-115 lines the Mg(2+) pocket. Gln-238 contributes to the substrate binding site. Asp-266 is a binding site for Mg(2+). 310–312 (ESQ) provides a ligand contact to substrate. The ATP site is built by Asp-488 and Gly-525. Asn-526 serves as a coordination point for Mg(2+). Ser-528 provides a ligand contact to substrate.

The protein belongs to the FGAMS family. Monomer. Part of the FGAM synthase complex composed of 1 PurL, 1 PurQ and 2 PurS subunits.

It is found in the cytoplasm. The catalysed reaction is N(2)-formyl-N(1)-(5-phospho-beta-D-ribosyl)glycinamide + L-glutamine + ATP + H2O = 2-formamido-N(1)-(5-O-phospho-beta-D-ribosyl)acetamidine + L-glutamate + ADP + phosphate + H(+). Its pathway is purine metabolism; IMP biosynthesis via de novo pathway; 5-amino-1-(5-phospho-D-ribosyl)imidazole from N(2)-formyl-N(1)-(5-phospho-D-ribosyl)glycinamide: step 1/2. Its function is as follows. Part of the phosphoribosylformylglycinamidine synthase complex involved in the purines biosynthetic pathway. Catalyzes the ATP-dependent conversion of formylglycinamide ribonucleotide (FGAR) and glutamine to yield formylglycinamidine ribonucleotide (FGAM) and glutamate. The FGAM synthase complex is composed of three subunits. PurQ produces an ammonia molecule by converting glutamine to glutamate. PurL transfers the ammonia molecule to FGAR to form FGAM in an ATP-dependent manner. PurS interacts with PurQ and PurL and is thought to assist in the transfer of the ammonia molecule from PurQ to PurL. The sequence is that of Phosphoribosylformylglycinamidine synthase subunit PurL from Cereibacter sphaeroides (strain KD131 / KCTC 12085) (Rhodobacter sphaeroides).